A 384-amino-acid chain; its full sequence is MSDVAARLETIRAAHLYRRLRTLSTPQDREVVIDGRRVLLFSSNSYLGLGINAHIRRSAVRALEKFGTGAGGSRLVTGNMTPHMQLESALAAFKGSESALAFTSGYTANMGVISALCHKDTVIFSDALNHASIIDGCRLARGRTVVYAHNDMDDLLEKIRQLRPRQGFIITDGVFSMDGDLARLPELAHIARSYGLTLMVDDAHATGVLGATGRGTLEHFGLSHEDVPVVTGTLSKAIPSEGGFVCGSEILCELLRNTARPFIFTTAPSPAAVAAATAGIGHIAAHPGLVRRLQDNVAYFTGSLAEQGMHVPGQSPIIPIMAGEEEKAVRAAEALLALGVFAPCIRYPTVPRGQARLRLTVMASHTRDDLDHAAVSLRKALAGV.

Arg-18 is a substrate binding site. 105 to 106 is a pyridoxal 5'-phosphate binding site; sequence GY. A substrate-binding site is contributed by His-130. Pyridoxal 5'-phosphate is bound by residues Ser-176, 201 to 204, and 233 to 236; these read DDAH and TLSK. An N6-(pyridoxal phosphate)lysine modification is found at Lys-236. Thr-349 is a binding site for substrate.

Belongs to the class-II pyridoxal-phosphate-dependent aminotransferase family. BioF subfamily. In terms of assembly, homodimer. Requires pyridoxal 5'-phosphate as cofactor.

It carries out the reaction 6-carboxyhexanoyl-[ACP] + L-alanine + H(+) = (8S)-8-amino-7-oxononanoate + holo-[ACP] + CO2. It participates in cofactor biosynthesis; biotin biosynthesis. Catalyzes the decarboxylative condensation of pimeloyl-[acyl-carrier protein] and L-alanine to produce 8-amino-7-oxononanoate (AON), [acyl-carrier protein], and carbon dioxide. This is Putative 8-amino-7-oxononanoate synthase (bioF) from Desulfovibrio desulfuricans (strain ATCC 27774 / DSM 6949 / MB).